A 109-amino-acid chain; its full sequence is Nucleoid-associated protein ECA1177 (109 aa).

The protein belongs to the YbaB/EbfC family. As to quaternary structure, homodimer.

It is found in the cytoplasm. It localises to the nucleoid. Binds to DNA and alters its conformation. May be involved in regulation of gene expression, nucleoid organization and DNA protection. This chain is Nucleoid-associated protein ECA1177, found in Pectobacterium atrosepticum (strain SCRI 1043 / ATCC BAA-672) (Erwinia carotovora subsp. atroseptica).